We begin with the raw amino-acid sequence, 332 residues long: Malate dehydrogenase 1, cytoplasmic (332 aa).

NAD(+)-binding positions include 16-17 and aspartate 43; that span reads QI. Methionine 56 bears the Methionine sulfoxide mark. Glycine 90 lines the NAD(+) pocket. Methionine sulfoxide is present on methionine 97. Arginine 99 is a binding site for oxaloacetate. Glutamine 113 is a binding site for NAD(+). Lysine 119 is covalently cross-linked (Glycyl lysine isopeptide (Lys-Gly) (interchain with G-Cter in ubiquitin)). Asparagine 132 provides a ligand contact to NAD(+). Asparagine 132, arginine 163, histidine 188, and serine 243 together coordinate oxaloacetate. The Proton acceptor role is filled by histidine 188.

This sequence belongs to the LDH/MDH superfamily. MDH type 2 family. In terms of assembly, forms a homodimer. Forms a disulfide-linked homodimer upon oxidation. Interacts with 14-3-3-like proteins GRF1 GRF3 and GRF8. Interacts with TRX1, TRX2, TRX3, TRX4 and TRX5. In terms of tissue distribution, expressed in rosette leaves.

Its subcellular location is the cytoplasm. It catalyses the reaction (S)-malate + NAD(+) = oxaloacetate + NADH + H(+). Its activity is regulated as follows. Decreased activity upon treatment with hydrogen peroxide. Catalyzes a reversible NAD-dependent dehydrogenase reaction involved in central metabolism and redox homeostasis between organellar compartments. The polypeptide is Malate dehydrogenase 1, cytoplasmic (MDH1) (Arabidopsis thaliana (Mouse-ear cress)).